The chain runs to 273 residues: Large ribosomal subunit protein uL2 (273 aa).

Positions 221–262 (RGTAMNPVDHPHGGGEGRNFGKHPVTPWGVQTKGKKTRHNKR) are disordered. Residues 253 to 262 (KGKKTRHNKR) are compositionally biased toward basic residues.

Belongs to the universal ribosomal protein uL2 family. Part of the 50S ribosomal subunit. Forms a bridge to the 30S subunit in the 70S ribosome.

Its function is as follows. One of the primary rRNA binding proteins. Required for association of the 30S and 50S subunits to form the 70S ribosome, for tRNA binding and peptide bond formation. It has been suggested to have peptidyltransferase activity; this is somewhat controversial. Makes several contacts with the 16S rRNA in the 70S ribosome. This is Large ribosomal subunit protein uL2 from Aggregatibacter actinomycetemcomitans (Actinobacillus actinomycetemcomitans).